We begin with the raw amino-acid sequence, 373 residues long: Arabinonate dehydratase (373 aa).

Residues D199, E225, and E251 each contribute to the Mg(2+) site.

Belongs to the mandelate racemase/muconate lactonizing enzyme family. In terms of assembly, homooctamer. Mg(2+) serves as cofactor.

It carries out the reaction D-arabinonate = 2-dehydro-3-deoxy-D-arabinonate + H2O. Inhibited by substrate levels above 8 mM. In terms of biological role, catalyzes the dehydration of D-arabinonate to 2-keto-3-deoxy-D-arabinonate. Participates in a pentose oxidation pathway that converts D-arabinonate to 2-oxoglutarate. The chain is Arabinonate dehydratase from Saccharolobus solfataricus (strain ATCC 35092 / DSM 1617 / JCM 11322 / P2) (Sulfolobus solfataricus).